Reading from the N-terminus, the 199-residue chain is MNSSILTGIFGGSFDPPHEGHSEILKSFFLEVPDCKEVFVIPNRQNPLKEEKISLSENILEMLNLFVSEFSQSIRILDLELKRSGPSYTIQTIQELKTIYPNRKFVLLIGEDNYSNFHKWKDWEKILTEVETIFVFRRFSKEVPLNSHLNSLFEFKFLENPLIPVTSTDLRKSFFQSKVPNLISKKVLDYILKNKLYSK.

The protein belongs to the NadD family.

It catalyses the reaction nicotinate beta-D-ribonucleotide + ATP + H(+) = deamido-NAD(+) + diphosphate. The protein operates within cofactor biosynthesis; NAD(+) biosynthesis; deamido-NAD(+) from nicotinate D-ribonucleotide: step 1/1. Functionally, catalyzes the reversible adenylation of nicotinate mononucleotide (NaMN) to nicotinic acid adenine dinucleotide (NaAD). This is Probable nicotinate-nucleotide adenylyltransferase from Leptospira interrogans serogroup Icterohaemorrhagiae serovar copenhageni (strain Fiocruz L1-130).